We begin with the raw amino-acid sequence, 62 residues long: Photosystem II reaction center protein Z (62 aa).

2 consecutive transmembrane segments (helical) span residues 8 to 28 (ALFA…VAFA) and 41 to 61 (FSGA…NSFI).

It belongs to the PsbZ family. In terms of assembly, PSII is composed of 1 copy each of membrane proteins PsbA, PsbB, PsbC, PsbD, PsbE, PsbF, PsbH, PsbI, PsbJ, PsbK, PsbL, PsbM, PsbT, PsbY, PsbZ, Psb30/Ycf12, at least 3 peripheral proteins of the oxygen-evolving complex and a large number of cofactors. It forms dimeric complexes.

Its subcellular location is the plastid. The protein resides in the chloroplast thylakoid membrane. Functionally, may control the interaction of photosystem II (PSII) cores with the light-harvesting antenna, regulates electron flow through the 2 photosystem reaction centers. PSII is a light-driven water plastoquinone oxidoreductase, using light energy to abstract electrons from H(2)O, generating a proton gradient subsequently used for ATP formation. The polypeptide is Photosystem II reaction center protein Z (Adiantum capillus-veneris (Maidenhair fern)).